A 93-amino-acid chain; its full sequence is Putative protein adenylyltransferase MJ0435 (93 aa).

Residues 26 to 40 carry the GSX(10)DXD motif motif; the sequence is GSYARNEQKETSDID. Asp-38, Asp-40, and Asp-70 together coordinate Mg(2+).

Belongs to the MntA antitoxin family. In terms of assembly, probably forms a complex with cognate toxin MJ0434. It depends on Mg(2+) as a cofactor.

It carries out the reaction L-tyrosyl-[protein] + ATP = O-(5'-adenylyl)-L-tyrosyl-[protein] + diphosphate. It catalyses the reaction O-(5'-adenylyl)-L-tyrosyl-[protein] + ATP = O-[5'-(adenylyl-(5'-&gt;3')-adenylyl)]-L-tyrosyl-[protein] + diphosphate. In terms of biological role, probable antitoxin component of a putative type VII toxin-antitoxin (TA) system. Neutralizes cognate toxic MJ0434 by di-AMPylation. This is Putative protein adenylyltransferase MJ0435 from Methanocaldococcus jannaschii (strain ATCC 43067 / DSM 2661 / JAL-1 / JCM 10045 / NBRC 100440) (Methanococcus jannaschii).